Here is a 455-residue protein sequence, read N- to C-terminus: 3-phosphoshikimate 1-carboxyvinyltransferase (455 aa).

Residues 1 to 19 (MSHGASSRPATARKSSGLS) show a composition bias toward polar residues. A disordered region spans residues 1 to 25 (MSHGASSRPATARKSSGLSGTVRIP). K28 provides a ligand contact to phosphoenolpyruvate. 3-phosphoshikimate is bound by residues S29 and R33. R128 is a binding site for phosphoenolpyruvate. Residues S173, A174, Q175, D326, and K353 each contribute to the 3-phosphoshikimate site. Phosphoenolpyruvate is bound at residue Q175. Residue D326 is the Proton acceptor of the active site. Phosphoenolpyruvate-binding residues include R357 and R405.

It belongs to the EPSP synthase family. As to quaternary structure, monomer.

The protein resides in the cytoplasm. The enzyme catalyses 3-phosphoshikimate + phosphoenolpyruvate = 5-O-(1-carboxyvinyl)-3-phosphoshikimate + phosphate. The protein operates within metabolic intermediate biosynthesis; chorismate biosynthesis; chorismate from D-erythrose 4-phosphate and phosphoenolpyruvate: step 6/7. Is resistant to inhibition by glyphosate (glyphosate-tolerant) like other members of class II EPSPS, in contrast to class I EPSPS, which is glyphosate-sensitive. Is much less sensitive to inhibition by the (R)-difluoromethyl and (R)-phosphonate analogs of the tetrahedral reaction intermediate than the representative class I EPSPS from E.coli. Is highly activated in the presence of cations, such as NH4(+), Rb(+), and K(+). Its function is as follows. Catalyzes the transfer of the enolpyruvyl moiety of phosphoenolpyruvate (PEP) to the 5-hydroxyl of shikimate-3-phosphate (S3P) to produce enolpyruvyl shikimate-3-phosphate and inorganic phosphate. This is 3-phosphoshikimate 1-carboxyvinyltransferase from Agrobacterium sp. (strain CP4).